The sequence spans 515 residues: Endoglucanase 2 (515 aa).

Positions 1–31 (MVAKPRSRCCCCSVFIGVIILIAIIIAVIFT) are cleaved as a signal peptide. N-linked (GlcNAc...) asparagine glycosylation occurs at N37. D100 acts as the Nucleophile in catalysis. N-linked (GlcNAc...) asparagine glycosylation is present at N250. H433 is a catalytic residue. Residue N475 is glycosylated (N-linked (GlcNAc...) asparagine). D480 is a catalytic residue. The N-linked (GlcNAc...) asparagine glycan is linked to N483. E489 is an active-site residue.

The protein belongs to the glycosyl hydrolase 9 (cellulase E) family.

The protein localises to the secreted. It carries out the reaction Endohydrolysis of (1-&gt;4)-beta-D-glucosidic linkages in cellulose, lichenin and cereal beta-D-glucans.. In Arabidopsis thaliana (Mouse-ear cress), this protein is Endoglucanase 2.